The primary structure comprises 474 residues: Trehalose-6-phosphate synthase (474 aa).

D-glucose 6-phosphate is bound at residue Arg10. UDP-alpha-D-glucose is bound at residue 22 to 23 (GG). The D-glucose 6-phosphate site is built by Tyr77 and Asp131. Residues Arg263 and Lys268 each contribute to the UDP-alpha-D-glucose site. Residue Arg301 coordinates D-glucose 6-phosphate. Residues Phe340 and 366-370 (LVAKE) each bind UDP-alpha-D-glucose.

This sequence belongs to the glycosyltransferase 20 family. In terms of assembly, homotetramer.

It catalyses the reaction D-glucose 6-phosphate + UDP-alpha-D-glucose = alpha,alpha-trehalose 6-phosphate + UDP + H(+). Its pathway is glycan biosynthesis; trehalose biosynthesis. Its function is as follows. Probably involved in the osmoprotection via the biosynthesis of trehalose. Catalyzes the transfer of glucose from UDP-alpha-D-glucose (UDP-Glc) to D-glucose 6-phosphate (Glc-6-P) to form trehalose-6-phosphate. Acts with retention of the anomeric configuration of the UDP-sugar donor. The chain is Trehalose-6-phosphate synthase from Klebsiella pneumoniae subsp. pneumoniae (strain ATCC 700721 / MGH 78578).